The chain runs to 256 residues: L-erythrulose-1-phosphate isomerase (256 aa).

H96 functions as the Electrophile in the catalytic mechanism. E169 functions as the Proton acceptor in the catalytic mechanism. Residues G175 and S212 each contribute to the substrate site.

The protein belongs to the triosephosphate isomerase family. As to quaternary structure, homodimer.

It localises to the cytoplasm. The catalysed reaction is L-erythrulose 1-phosphate = D-erythrulose 4-phosphate. It functions in the pathway carbohydrate metabolism; erythritol degradation. Its function is as follows. Catalyzes the isomerization of D-erythrulose-4P to L-erythrulose-1P. The protein is L-erythrulose-1-phosphate isomerase of Brucella melitensis biotype 1 (strain ATCC 23456 / CCUG 17765 / NCTC 10094 / 16M).